A 31-amino-acid chain; its full sequence is LCSREGEFCYKLRKCCAGFYCKAFVLHCYRN.

3 disulfides stabilise this stretch: Cys2–Cys16, Cys9–Cys21, and Cys15–Cys28.

It belongs to the neurotoxin 10 (Hwtx-1) family. In terms of tissue distribution, expressed by the venom gland.

The protein resides in the secreted. Its function is as follows. Probable ion channel inhibitor. In Chilobrachys guangxiensis (Chinese earth tiger tarantula), this protein is Jingzhaotoxin F7-15.33.